Reading from the N-terminus, the 836-residue chain is Lon protease (836 aa).

In terms of domain architecture, Lon N-terminal spans 41-233 (LPVLPLRNTV…RLIHFLNREV (193 aa)). 385 to 392 (GPPGVGKT) is an ATP binding site. A Lon proteolytic domain is found at 627–811 (VMLSGVAVGL…DDLIDYVLEP (185 aa)). Catalysis depends on residues Ser-714 and Lys-757. The segment at 816 to 836 (APQFKVEDKDHTPETTGNESE) is disordered.

This sequence belongs to the peptidase S16 family. As to quaternary structure, homohexamer. Organized in a ring with a central cavity.

It localises to the cytoplasm. The enzyme catalyses Hydrolysis of proteins in presence of ATP.. In terms of biological role, ATP-dependent serine protease that mediates the selective degradation of mutant and abnormal proteins as well as certain short-lived regulatory proteins. Required for cellular homeostasis and for survival from DNA damage and developmental changes induced by stress. Degrades polypeptides processively to yield small peptide fragments that are 5 to 10 amino acids long. Binds to DNA in a double-stranded, site-specific manner. In Chloroherpeton thalassium (strain ATCC 35110 / GB-78), this protein is Lon protease.